Here is a 359-residue protein sequence, read N- to C-terminus: Peptide chain release factor 1 (359 aa).

An N5-methylglutamine modification is found at Q235. The segment at 283-305 (QKAESERSASRKTQVGSGDRSER) is disordered.

Belongs to the prokaryotic/mitochondrial release factor family. Post-translationally, methylated by PrmC. Methylation increases the termination efficiency of RF1.

Its subcellular location is the cytoplasm. In terms of biological role, peptide chain release factor 1 directs the termination of translation in response to the peptide chain termination codons UAG and UAA. This Bartonella bacilliformis (strain ATCC 35685 / KC583 / Herrer 020/F12,63) protein is Peptide chain release factor 1.